A 320-amino-acid chain; its full sequence is o-succinylbenzoate synthase (320 aa).

Lys133 serves as the catalytic Proton donor. Mg(2+)-binding residues include Asp161, Glu190, and Asp213. Lys235 functions as the Proton acceptor in the catalytic mechanism.

The protein belongs to the mandelate racemase/muconate lactonizing enzyme family. MenC type 1 subfamily. A divalent metal cation is required as a cofactor.

It catalyses the reaction (1R,6R)-6-hydroxy-2-succinyl-cyclohexa-2,4-diene-1-carboxylate = 2-succinylbenzoate + H2O. It participates in quinol/quinone metabolism; 1,4-dihydroxy-2-naphthoate biosynthesis; 1,4-dihydroxy-2-naphthoate from chorismate: step 4/7. The protein operates within quinol/quinone metabolism; menaquinone biosynthesis. Functionally, converts 2-succinyl-6-hydroxy-2,4-cyclohexadiene-1-carboxylate (SHCHC) to 2-succinylbenzoate (OSB). In Salmonella dublin (strain CT_02021853), this protein is o-succinylbenzoate synthase.